Here is a 132-residue protein sequence, read N- to C-terminus: MASSIWKGLVGIGLFALAHAAFSAAQHRSYMRLTEKEDETLPIDIVLQTLLAFIVACYGIVHIAGEFKDMDATSELRNKTFDTLRNHPSFYVFNHRGRVMFQPPESEDCHRIQAPFSSNSSLKLSKLESMHR.

At 1–3 (MAS) the chain is on the cytoplasmic side. A helical transmembrane segment spans residues 4 to 22 (SIWKGLVGIGLFALAHAAF). At 23–43 (SAAQHRSYMRLTEKEDETLPI) the chain is on the lumenal side. A helical membrane pass occupies residues 44 to 63 (DIVLQTLLAFIVACYGIVHI). At 64-132 (AGEFKDMDAT…KLSKLESMHR (69 aa)) the chain is on the cytoplasmic side.

Belongs to the membrane magnesium transporter (TC 1.A.67) family. Component of the ER membrane protein complex (EMC).

It is found in the endoplasmic reticulum membrane. The protein localises to the golgi apparatus membrane. It localises to the early endosome membrane. In terms of biological role, part of the endoplasmic reticulum membrane protein complex (EMC) that enables the energy-independent insertion into endoplasmic reticulum membranes of newly synthesized membrane proteins. Preferentially accommodates proteins with transmembrane domains that are weakly hydrophobic or contain destabilizing features such as charged and aromatic residues. Involved in the cotranslational insertion of multi-pass membrane proteins in which stop-transfer membrane-anchor sequences become ER membrane spanning helices. It is also required for the post-translational insertion of tail-anchored/TA proteins in endoplasmic reticulum membranes. By mediating the proper cotranslational insertion of N-terminal transmembrane domains in an N-exo topology, with translocated N-terminus in the lumen of the ER, controls the topology of multi-pass membrane proteins like the G protein-coupled receptors. By regulating the insertion of various proteins in membranes, it is indirectly involved in many cellular processes. May be involved in Mg(2+) transport. In Xenopus tropicalis (Western clawed frog), this protein is ER membrane protein complex subunit 5.